The chain runs to 197 residues: Probable deoxycytidylate deaminase (197 aa).

One can recognise a CMP/dCMP-type deaminase domain in the interval Lys-49–Tyr-183. Zn(2+) is bound at residue His-117. The Proton donor role is filled by Glu-119. 2 residues coordinate Zn(2+): Cys-143 and Cys-146.

This sequence belongs to the cytidine and deoxycytidylate deaminase family. It depends on Zn(2+) as a cofactor.

The enzyme catalyses dCMP + H2O + H(+) = dUMP + NH4(+). Functionally, supplies the nucleotide substrate for thymidylate synthetase. The sequence is that of Probable deoxycytidylate deaminase from Caenorhabditis elegans.